A 181-amino-acid polypeptide reads, in one-letter code: Large ribosomal subunit protein uL6 (181 aa).

The protein belongs to the universal ribosomal protein uL6 family. In terms of assembly, part of the 50S ribosomal subunit.

Its function is as follows. This protein binds to the 23S rRNA, and is important in its secondary structure. It is located near the subunit interface in the base of the L7/L12 stalk, and near the tRNA binding site of the peptidyltransferase center. This chain is Large ribosomal subunit protein uL6, found in Ruthia magnifica subsp. Calyptogena magnifica.